A 317-amino-acid polypeptide reads, in one-letter code: MLTCIQPSSSSIGGFGKADDNVRILLMASVRNEFGDTSIFSRLGVTALGQHYVLVTKKKMFGGYTTHMITANMRNRPFISIPFKVSSGAQSIEESRDLISRLTTVLGRPGMFSFDDPPIGSQFPVGKELIQLDEVPVGVHDRQDKYLEKGDEVFCEVNVSGVKFYHSGIYAGDGMCYHFVCDAQESESFADALAVFSGASAHVVYDTWFEFVYALVEVSDVPPKIFRASHPLICRSGEQVVKYAEHLQRELENYDIRRCNCQHFSSECSTGVPFSYDMTSNFKYLACTVLKPTSTVVNAMTRPNRDRSSFASSSTSS.

One can recognise an LRAT domain in the interval 156–277 (EVNVSGVKFY…CSTGVPFSYD (122 aa)). Active-site residues include histidine 166 and histidine 178. Cysteine 261 serves as the catalytic Acyl-thioester intermediate.

In terms of tissue distribution, highly expressed in the cells of the spermatheca, the mouth, and the lining of the pharynx, the rectum, and the excretory canal. Also expressed in the pharyngeal intestinal junction cell.

Its subcellular location is the apical cell membrane. In terms of biological role, putative acyltransferase. Plays a role in the morphogenesis of a vulval toroid cell, vulF, which is located where the vulva and the uterus connect. Not required for specifying vulval cell fate. The protein is Egg-laying defective protein 26 of Caenorhabditis elegans.